Here is an 856-residue protein sequence, read N- to C-terminus: DNA mismatch repair protein MutS (856 aa).

Position 618-625 (618-625) interacts with ATP; it reads GPNMGGKS.

The protein belongs to the DNA mismatch repair MutS family.

Functionally, this protein is involved in the repair of mismatches in DNA. It is possible that it carries out the mismatch recognition step. This protein has a weak ATPase activity. The sequence is that of DNA mismatch repair protein MutS from Shewanella baltica (strain OS185).